Here is a 157-residue protein sequence, read N- to C-terminus: MSQKIIDLVTAVVAPAIPDPYELVDIEYEKIGSDYILSVLIDKPGGITVEDTADLTEIISPLLDTIQPDPFPDQYMLEVSSPGLERPLKTKEALKNAVGQYINVSLYKAIDKIKIFQGDLLAFDGETLTIDYLDKTRHKTVEIPYQTVAKARLAVKL.

It belongs to the RimP family.

It localises to the cytoplasm. Functionally, required for maturation of 30S ribosomal subunits. This is Ribosome maturation factor RimP from Streptococcus thermophilus (strain ATCC BAA-491 / LMD-9).